The following is a 258-amino-acid chain: MEITEPRRLYQQLAADLKERIEQGVYLVGDKLPAERFIADEKNVSRTVVREAIIMLEVEGYVEVRKGSGIHVVSNQPRHQQAADNNMEFANYGPFELLQARQLIESNIAEFAATQVTKQDIMKLMAIQEQARGEQCFRDSEWDLQFHIQVALATQNSALAAIVEKMWTQRSHNPYWKKLHEHIDSRTVDNWCDDHDQILKALIRKDPHAAKLAMWQHLENTKIMLFNETSDDFEFNADRYLFAENPVVHLDTATSGSK.

The region spanning 7–75 is the HTH gntR-type domain; sequence RRLYQQLAAD…KGSGIHVVSN (69 aa). The H-T-H motif DNA-binding region spans 35-54; sequence ERFIADEKNVSRTVVREAII.

Functionally, repressor for the exu regulon that encode genes involved in hexuronate utilization. It regulates the ExuT, UxaCA and UxuRAB operons. Binds D-tagaturonate and D-fructuronate as inducers. The protein is Exu regulon transcriptional regulator (exuR) of Escherichia coli O157:H7.